A 639-amino-acid polypeptide reads, in one-letter code: Serine protease HtrA-like (639 aa).

Basic and acidic residues-rich tracts occupy residues 1-13 (MDNDKKHVIPREQ), 21-75 (YFHN…EIHQ), 106-187 (QQLK…KESS), and 195-205 (KSQKIEQKEQK). The interval 1–262 (MDNDKKHVIP…LENEPKNNDT (262 aa)) is disordered. A compositionally biased stretch (polar residues) spans 206 to 219 (ASSNETSNKELNSY). 2 stretches are compositionally biased toward basic and acidic residues: residues 220 to 235 (TKDKNNKVEDNQDLKK) and 245 to 262 (NKLEENEHLENEPKNNDT). The chain crosses the membrane as a helical span at residues 277-297 (IVIVVAIILIVILISAIISTM). Residues histidine 374, aspartate 404, and serine 489 each act as charge relay system in the active site. Residues 527–629 (EIAEELEKKG…TLSAKIYREG (103 aa)) form the PDZ domain.

Belongs to the peptidase S1C family.

The protein resides in the cell membrane. This Staphylococcus haemolyticus (strain JCSC1435) protein is Serine protease HtrA-like.